We begin with the raw amino-acid sequence, 532 residues long: Intercellular adhesion molecule 1 (532 aa).

The signal sequence occupies residues 1–27 (MAPSGPQPALPILVVLLGALLLGPGNA). Topologically, residues 28-480 (QTSVFPPEVI…TVNVLSPRYE (453 aa)) are extracellular. Ig-like C2-type domains follow at residues 41–103 (GGSV…QSSA) and 128–193 (GKNL…LDLR). N-linked (GlcNAc...) asparagine glycosylation is present at Asn47. 2 disulfides stabilise this stretch: Cys48-Cys92 and Cys52-Cys96. 2 N-linked (GlcNAc...) asparagine glycosylation sites follow: Asn130 and Asn145. Cysteines 135 and 186 form a disulfide. A Cell attachment site; atypical motif is present at residues 152 to 154 (RGE). Asn183, Asn202, Asn267, Asn296, and Asn316 each carry an N-linked (GlcNAc...) asparagine glycan. In terms of domain architecture, Ig-like C2-type 3 spans 230 to 297 (DTQGTVVCSL…LLCGVMLGNQ (68 aa)). Cys237 and Cys290 form a disulfide bridge. An Ig-like C2-type 4 domain is found at 325–378 (GTEVIVECEAHPRAKVMLNGVPAQPPGPRAQFLLKATPEDNGRSFSCSATLEVA). A disulfide bond links Cys332 and Cys371. Asn385 and Asn406 each carry an N-linked (GlcNAc...) asparagine glycan. Disulfide bonds link Cys403-Cys419, Cys419-Cys457, and Cys431-Cys457. Residues 412 to 464 (NSQQTPMCQAWGNPLPQLKCLKDGTFPLPIGQSVTVTRDLEGTYLCQARSTRG) form the Ig-like C2-type 5 domain. The chain crosses the membrane as a helical span at residues 481–503 (VVIIPVVAAAVILGTAGVATYLY). Residues 504–532 (NRQRKIRKYRLQQAQNGTPMKPNTQATPP) are Cytoplasmic-facing. The disordered stretch occupies residues 513–532 (RLQQAQNGTPMKPNTQATPP). Over residues 515–532 (QQAQNGTPMKPNTQATPP) the composition is skewed to polar residues. A phosphothreonine mark is found at Thr521 and Thr530.

This sequence belongs to the immunoglobulin superfamily. ICAM family. Homodimer. Interacts with MUC1 and promotes cell aggregation in epithelial cells. Interacts with ARHGEF26/SGEF. Interacts (on T cell side) with CD81, CD247 and CD9 at immunological synapses between antigen-presenting cells and T cells. Post-translationally, monoubiquitinated, which is promoted by MARCH9 and leads to endocytosis.

It is found in the membrane. Functionally, ICAM proteins are ligands for the leukocyte adhesion protein LFA-1 (integrin alpha-L/beta-2). During leukocyte trans-endothelial migration, ICAM1 engagement promotes the assembly of endothelial apical cups through ARHGEF26/SGEF and RHOG activation. The protein is Intercellular adhesion molecule 1 (ICAM1) of Macaca mulatta (Rhesus macaque).